A 513-amino-acid chain; its full sequence is Activin receptor type-2A (513 aa).

A signal peptide spans 1-19; that stretch reads MGAAAKLAFAVFLISCSSG. Over 20-135 the chain is Extracellular; sequence AILGRSETQE…TSNPVTPKPP (116 aa). Cystine bridges form between Cys-30/Cys-60, Cys-50/Cys-78, Cys-85/Cys-104, Cys-91/Cys-103, and Cys-105/Cys-110. Asn-43 and Asn-66 each carry an N-linked (GlcNAc...) asparagine glycan. Residues 136–161 traverse the membrane as a helical segment; sequence YYNILLYSLVPLMLIAGIVICAFWVY. The Cytoplasmic segment spans residues 162-513; sequence RHHKMAYPPV…VDFPPKESSL (352 aa). Residues 192-485 enclose the Protein kinase domain; the sequence is LQLLEVKARG…GERITQMQRL (294 aa). ATP-binding positions include 198 to 206 and Lys-219; that span reads KARGRFGCV. Asp-322 acts as the Proton acceptor in catalysis.

This sequence belongs to the protein kinase superfamily. TKL Ser/Thr protein kinase family. TGFB receptor subfamily. As to quaternary structure, part of a complex consisting of MAGI2/ARIP1, ACVR2A, ACVR1B and SMAD3. Interacts with MAGI2/ARIP1. Interacts with type I receptor ACVR1. Interacts with BMP7. Interacts with TSC22D1/TSC-22. Interacts with activin A/INHBA. It depends on Mg(2+) as a cofactor. Requires Mn(2+) as cofactor. As to expression, brain, testis, intestine, liver and kidney.

It localises to the cell membrane. It carries out the reaction L-threonyl-[receptor-protein] + ATP = O-phospho-L-threonyl-[receptor-protein] + ADP + H(+). The catalysed reaction is L-seryl-[receptor-protein] + ATP = O-phospho-L-seryl-[receptor-protein] + ADP + H(+). Functionally, on ligand binding, forms a receptor complex consisting of two type II and two type I transmembrane serine/threonine kinases. Type II receptors phosphorylate and activate type I receptors which autophosphorylate, then bind and activate SMAD transcriptional regulators. Receptor for activin A, activin B and inhibin A. Mediates induction of adipogenesis by GDF6. The protein is Activin receptor type-2A of Mus musculus (Mouse).